The primary structure comprises 472 residues: Glutamate--tRNA ligase (472 aa).

The 'HIGH' region signature appears at 10–20 (PSPTGYLHVGG). Positions 99, 101, 126, and 128 each coordinate Zn(2+). Residues 238–242 (KLSKR) carry the 'KMSKS' region motif. Lysine 241 contacts ATP.

The protein belongs to the class-I aminoacyl-tRNA synthetase family. Glutamate--tRNA ligase type 1 subfamily. As to quaternary structure, monomer. It depends on Zn(2+) as a cofactor.

The protein localises to the cytoplasm. It catalyses the reaction tRNA(Glu) + L-glutamate + ATP = L-glutamyl-tRNA(Glu) + AMP + diphosphate. Functionally, catalyzes the attachment of glutamate to tRNA(Glu) in a two-step reaction: glutamate is first activated by ATP to form Glu-AMP and then transferred to the acceptor end of tRNA(Glu). The polypeptide is Glutamate--tRNA ligase (Proteus mirabilis (strain HI4320)).